The sequence spans 61 residues: DNA-binding protein 7a (61 aa).

The segment at 37–61 (NGKTGRGAVSEKDAPKELLEKLEKK) is disordered. The segment covering 45 to 61 (VSEKDAPKELLEKLEKK) has biased composition (basic and acidic residues).

It belongs to the 7 kDa DNA-binding/endoribonuclease P2 family. Monomer.

The protein resides in the cytoplasm. In terms of biological role, can constrain negative DNA supercoils. May be involved in maintaining the integrity of the genome at high temperature. This Acidianus hospitalis (strain W1) protein is DNA-binding protein 7a.